A 291-amino-acid chain; its full sequence is MKRNDPCWCGSNKKWKHCHYPTKPERPLDNLRQLYASRYDIIIKTPEQIEKIRKACQVTAHILDALCEAAKEGVTTNELDLLSRELHKRHNAIPAPLNYGHPPFPKTICTSLNEVICHGIPNDIPLQNGDIMNIDVSCIVDGFYGDCSRMVMIGEVSEIKRKVCEASLEALNAAISILEPNLPLYEIGEVIENCAAKYGFSVVDQFVGHGVGVKFHENPFVAHHRNSCKIPLAPGMIFTIEPMINVGKKEGFIDPINHWEARTCDHQPSAQWEHAILITDSGCEVLTLLDK.

Histidine 118 lines the substrate pocket. Residues aspartate 135, aspartate 146, and histidine 209 each coordinate a divalent metal cation. Histidine 216 contributes to the substrate binding site. A divalent metal cation is bound by residues glutamate 241 and glutamate 273.

The protein belongs to the peptidase M24A family. Methionine aminopeptidase type 1 subfamily. Monomer. Co(2+) is required as a cofactor. The cofactor is Zn(2+). It depends on Mn(2+) as a cofactor. Requires Fe(2+) as cofactor.

It catalyses the reaction Release of N-terminal amino acids, preferentially methionine, from peptides and arylamides.. In terms of biological role, removes the N-terminal methionine from nascent proteins. The N-terminal methionine is often cleaved when the second residue in the primary sequence is small and uncharged (Met-Ala-, Cys, Gly, Pro, Ser, Thr, or Val). Requires deformylation of the N(alpha)-formylated initiator methionine before it can be hydrolyzed. The polypeptide is Methionine aminopeptidase (Chlamydia trachomatis serovar D (strain ATCC VR-885 / DSM 19411 / UW-3/Cx)).